The sequence spans 61 residues: Photosystem II reaction center protein Z (61 aa).

The next 2 helical transmembrane spans lie at 5-25 and 38-58; these read LTAL…VALA and NKAF…DGIS.

This sequence belongs to the PsbZ family. In terms of assembly, PSII is composed of 1 copy each of membrane proteins PsbA, PsbB, PsbC, PsbD, PsbE, PsbF, PsbH, PsbI, PsbJ, PsbK, PsbL, PsbM, PsbT, PsbX, PsbY, PsbZ, Psb30/Ycf12, at least 3 peripheral proteins of the oxygen-evolving complex and a large number of cofactors. It forms dimeric complexes.

It localises to the plastid. The protein localises to the chloroplast thylakoid membrane. In terms of biological role, may control the interaction of photosystem II (PSII) cores with the light-harvesting antenna, regulates electron flow through the 2 photosystem reaction centers. PSII is a light-driven water plastoquinone oxidoreductase, using light energy to abstract electrons from H(2)O, generating a proton gradient subsequently used for ATP formation. The polypeptide is Photosystem II reaction center protein Z (Skeletonema costatum (Marine centric diatom)).